Consider the following 803-residue polypeptide: Homeobox protein Wariai (803 aa).

A compositionally biased stretch (polar residues) spans 23 to 41 (SDYDSYEQQYNNPTGSKQY). A disordered region spans residues 23–144 (SDYDSYEQQY…PTPYSSNSFS (122 aa)). Residues 42–124 (NNNNNNNTNT…NNNNNNNNNN (83 aa)) are compositionally biased toward low complexity. Residues 125 to 138 (QHLSQSQQLSPTPY) show a composition bias toward polar residues. Positions 162–221 (SKKKRKRTSPDQLKLLEKIFMAHQHPNLNLRSQLAVELHMTARSVQIWFQNRRAKARNME) form a DNA-binding region, homeobox. The segment at 288 to 330 (INGNMGGGGGGGGGSHNHHHHNHNHNHHNHNHNHNHNQPLSNG) is disordered. A compositionally biased stretch (gly residues) spans 291-302 (NMGGGGGGGGGS). Residues 303–322 (HNHHHHNHNHNHHNHNHNHN) are compositionally biased toward basic residues. ANK repeat units lie at residues 374 to 403 (KGLS…NPNI), 407 to 436 (QGNT…DPNL), 440 to 469 (EGVS…EVSV), 474 to 503 (NGET…KASV), 507 to 536 (NNRT…DMNA), 540 to 569 (DGHT…DPNI), 573 to 602 (EGYT…KLNI), 606 to 636 (NGQN…EIAA), and 642 to 671 (QGYT…SKKI). The segment at 695-760 (KSSNNNNSNS…PPGNKFEEDD (66 aa)) is disordered. The segment covering 696-746 (SSNNNNSNSNINNINNINNINNINSQPNTNSDNNNNNNNNNFNENYSNGNN) has biased composition (low complexity).

It is found in the nucleus. Putative transcription factor, that seems to be involved in anterior-posterior patterning of the slug, probably by controlling the proportions of prestalk and prespore cells. This chain is Homeobox protein Wariai (warA), found in Dictyostelium discoideum (Social amoeba).